A 272-amino-acid polypeptide reads, in one-letter code: 2-succinyl-6-hydroxy-2,4-cyclohexadiene-1-carboxylate synthase (272 aa).

This sequence belongs to the AB hydrolase superfamily. MenH family. Monomer.

It catalyses the reaction 5-enolpyruvoyl-6-hydroxy-2-succinyl-cyclohex-3-ene-1-carboxylate = (1R,6R)-6-hydroxy-2-succinyl-cyclohexa-2,4-diene-1-carboxylate + pyruvate. It participates in quinol/quinone metabolism; 1,4-dihydroxy-2-naphthoate biosynthesis; 1,4-dihydroxy-2-naphthoate from chorismate: step 3/7. Its pathway is quinol/quinone metabolism; menaquinone biosynthesis. Functionally, catalyzes a proton abstraction reaction that results in 2,5-elimination of pyruvate from 2-succinyl-5-enolpyruvyl-6-hydroxy-3-cyclohexene-1-carboxylate (SEPHCHC) and the formation of 2-succinyl-6-hydroxy-2,4-cyclohexadiene-1-carboxylate (SHCHC). This chain is 2-succinyl-6-hydroxy-2,4-cyclohexadiene-1-carboxylate synthase, found in Yersinia pseudotuberculosis serotype IB (strain PB1/+).